The sequence spans 469 residues: MTAPRTLYDKIWDDHVVDVEPDGSALLYIDRHLVHEVTSPQAFEGLRVAGRTVRAPHKTLAVVDHNVQTSDRSKGIEDPESRTQLEALAENVRDFGIEFYDALDQRQGIVHIIGPEQGFTLPGQTIVCGDSHTSTHGAFGALAHGIGTSEVEHVLATQTLIQRKAKNMRVTVDGTLPRGVSAKDIVLAIIGEIGTAGGTGHVIEYAGEAIRALSMEGRMTICNMSIEGGARAGMVAPDETTYAYVNGRPKAPKGAAFDAARRYWESLATDEGAHFDREIRLDAANLPPLVSWGTSPEDIVSILGTVPDPAQIADENKRQSKEKALAYMGLTPGTRMTDVTLDRVFIGSCTNGRIEDLRIVAKMVEGRKVHDSVSAMVVPGSGLVKAQAEAEGIDRILKDAGFDWREPGCSMCLGMNPDKLRPGERCASTSNRNFEGRQGPRGRTHLVSPAMAAAAAVAGRFVDIREWRG.

[4Fe-4S] cluster is bound by residues Cys349, Cys409, and Cys412.

Belongs to the aconitase/IPM isomerase family. LeuC type 1 subfamily. In terms of assembly, heterodimer of LeuC and LeuD. It depends on [4Fe-4S] cluster as a cofactor.

The enzyme catalyses (2R,3S)-3-isopropylmalate = (2S)-2-isopropylmalate. The protein operates within amino-acid biosynthesis; L-leucine biosynthesis; L-leucine from 3-methyl-2-oxobutanoate: step 2/4. Catalyzes the isomerization between 2-isopropylmalate and 3-isopropylmalate, via the formation of 2-isopropylmaleate. This Methylorubrum extorquens (strain CM4 / NCIMB 13688) (Methylobacterium extorquens) protein is 3-isopropylmalate dehydratase large subunit.